We begin with the raw amino-acid sequence, 146 residues long: ATP synthase epsilon chain (146 aa).

The tract at residues 103-124 is disordered; it reads QAERELGQLPEEEDEDSRRARE.

The protein belongs to the ATPase epsilon chain family. In terms of assembly, F-type ATPases have 2 components, CF(1) - the catalytic core - and CF(0) - the membrane proton channel. CF(1) has five subunits: alpha(3), beta(3), gamma(1), delta(1), epsilon(1). CF(0) has three main subunits: a, b and c.

Its subcellular location is the cell membrane. Functionally, produces ATP from ADP in the presence of a proton gradient across the membrane. This Rubrobacter xylanophilus (strain DSM 9941 / JCM 11954 / NBRC 16129 / PRD-1) protein is ATP synthase epsilon chain.